Here is a 379-residue protein sequence, read N- to C-terminus: Transcription termination factor Rho (379 aa).

The Rho RNA-BD domain occupies 1–68; that stretch reads MTDKYGFLRS…KRIFQINGRF (68 aa). Residues 111–116, 123–128, and Arg154 contribute to the ATP site; these read GKGQRG and KTGKTT.

This sequence belongs to the Rho family. Homohexamer. The homohexamer assembles into an open ring structure.

Functionally, facilitates transcription termination by a mechanism that involves Rho binding to the nascent RNA, activation of Rho's RNA-dependent ATPase activity, and release of the mRNA from the DNA template. The protein is Transcription termination factor Rho of Karelsulcia muelleri (strain SMDSEM) (Sulcia muelleri).